We begin with the raw amino-acid sequence, 392 residues long: Imidazolonepropionase (392 aa).

Fe(3+) is bound by residues His-69 and His-71. 2 residues coordinate Zn(2+): His-69 and His-71. 4-imidazolone-5-propanoate is bound by residues Arg-78, Tyr-136, and His-163. Residue Tyr-136 coordinates N-formimidoyl-L-glutamate. A Fe(3+)-binding site is contributed by His-226. His-226 serves as a coordination point for Zn(2+). Gln-229 contributes to the 4-imidazolone-5-propanoate binding site. Residue Asp-302 participates in Fe(3+) binding. A Zn(2+)-binding site is contributed by Asp-302. N-formimidoyl-L-glutamate-binding residues include Asn-304 and Gly-306. Ser-307 is a binding site for 4-imidazolone-5-propanoate.

The protein belongs to the metallo-dependent hydrolases superfamily. HutI family. Requires Zn(2+) as cofactor. It depends on Fe(3+) as a cofactor.

Its subcellular location is the cytoplasm. It catalyses the reaction 4-imidazolone-5-propanoate + H2O = N-formimidoyl-L-glutamate. The protein operates within amino-acid degradation; L-histidine degradation into L-glutamate; N-formimidoyl-L-glutamate from L-histidine: step 3/3. Functionally, catalyzes the hydrolytic cleavage of the carbon-nitrogen bond in imidazolone-5-propanoate to yield N-formimidoyl-L-glutamate. It is the third step in the universal histidine degradation pathway. In Salinispora tropica (strain ATCC BAA-916 / DSM 44818 / JCM 13857 / NBRC 105044 / CNB-440), this protein is Imidazolonepropionase.